The following is a 320-amino-acid chain: Peroxidase 66 (320 aa).

The signal sequence occupies residues 1 to 29 (MAASVSASCLNRLSSLAVVLVALASAASA). Gln30 carries the pyrrolidone carboxylic acid modification. 4 disulfide bridges follow: Cys40/Cys118, Cys73/Cys78, Cys124/Cys315, and Cys202/Cys227. The active-site Proton acceptor is His71. Residues Asp72, Val75, Gly77, Asp79, and Ser81 each contribute to the Ca(2+) site. 2 N-linked (GlcNAc...) asparagine glycosylation sites follow: Asn85 and Asn96. Substrate is bound at residue Pro165. His195 is a binding site for heme b. Thr196 serves as a coordination point for Ca(2+). N-linked (GlcNAc...) asparagine glycosylation is present at Asn211. Asp239, Thr242, and Asp247 together coordinate Ca(2+).

The protein belongs to the peroxidase family. Classical plant (class III) peroxidase subfamily. It depends on heme b as a cofactor. The cofactor is Ca(2+).

It is found in the secreted. It carries out the reaction 2 a phenolic donor + H2O2 = 2 a phenolic radical donor + 2 H2O. Functionally, removal of H(2)O(2), oxidation of toxic reductants, biosynthesis and degradation of lignin, suberization, auxin catabolism, response to environmental stresses such as wounding, pathogen attack and oxidative stress. These functions might be dependent on each isozyme/isoform in each plant tissue. This Zea mays (Maize) protein is Peroxidase 66 (PER66).